We begin with the raw amino-acid sequence, 151 residues long: Aspartate carbamoyltransferase regulatory chain (151 aa).

4 residues coordinate Zn(2+): Cys108, Cys113, Cys136, and Cys139.

The protein belongs to the PyrI family. Contains catalytic and regulatory chains. Zn(2+) is required as a cofactor.

Its function is as follows. Involved in allosteric regulation of aspartate carbamoyltransferase. This is Aspartate carbamoyltransferase regulatory chain from Porphyromonas gingivalis (strain ATCC 33277 / DSM 20709 / CIP 103683 / JCM 12257 / NCTC 11834 / 2561).